Here is a 207-residue protein sequence, read N- to C-terminus: Small ribosomal subunit protein uS4c (207 aa).

Residues 92–153 (MRLDNILFRL…PKIYQSIITK (62 aa)) enclose the S4 RNA-binding domain.

The protein belongs to the universal ribosomal protein uS4 family. As to quaternary structure, part of the 30S ribosomal subunit. Contacts protein S5. The interaction surface between S4 and S5 is involved in control of translational fidelity.

Its subcellular location is the plastid. The protein resides in the chloroplast. Its function is as follows. One of the primary rRNA binding proteins, it binds directly to 16S rRNA where it nucleates assembly of the body of the 30S subunit. Functionally, with S5 and S12 plays an important role in translational accuracy. In Equisetum bogotense (Horsetail), this protein is Small ribosomal subunit protein uS4c (rps4).